Here is an 834-residue protein sequence, read N- to C-terminus: Periplasmic nitrate reductase (834 aa).

A signal peptide (tat-type signal) is located at residues 1–29; sequence MKLSRREFAKANAAAIAAAAAGLPLASTA. One can recognise a 4Fe-4S Mo/W bis-MGD-type domain in the interval 41 to 97; that stretch reads LDWNKAPCRFCGTGCSVMVATRDNRVVATHGDVKAEVNRGLNCVKGYFLSKIMYGVD. [4Fe-4S] cluster contacts are provided by Cys-48, Cys-51, Cys-55, and Cys-83. Mo-bis(molybdopterin guanine dinucleotide)-binding positions include Lys-85, Gln-152, Asn-177, Cys-181, 214 to 221, 245 to 249, 264 to 266, Met-375, Gln-379, Asn-485, 511 to 512, Lys-534, Asp-561, and 721 to 730; these read WGSNMAEM, STFEH, QTD, SD, and TGRVLEHWHT. Phe-797 is a substrate binding site. Positions 805 and 822 each coordinate Mo-bis(molybdopterin guanine dinucleotide).

The protein belongs to the prokaryotic molybdopterin-containing oxidoreductase family. NasA/NapA/NarB subfamily. As to quaternary structure, component of the periplasmic nitrate reductase NapAB complex composed of NapA and NapB. Requires [4Fe-4S] cluster as cofactor. The cofactor is Mo-bis(molybdopterin guanine dinucleotide). In terms of processing, predicted to be exported by the Tat system. The position of the signal peptide cleavage has not been experimentally proven.

Its subcellular location is the periplasm. The catalysed reaction is 2 Fe(II)-[cytochrome] + nitrate + 2 H(+) = 2 Fe(III)-[cytochrome] + nitrite + H2O. Catalytic subunit of the periplasmic nitrate reductase complex NapAB. Receives electrons from NapB and catalyzes the reduction of nitrate to nitrite. The chain is Periplasmic nitrate reductase from Ectopseudomonas mendocina (strain ymp) (Pseudomonas mendocina).